The primary structure comprises 89 residues: Small ribosomal subunit protein uS15 (89 aa).

Basic and acidic residues predominate over residues 1–10 (MSITAEKKQE). Positions 1–24 (MSITAEKKQEVIQSNARAEGDTGS) are disordered.

The protein belongs to the universal ribosomal protein uS15 family. Part of the 30S ribosomal subunit. Forms a bridge to the 50S subunit in the 70S ribosome, contacting the 23S rRNA.

Functionally, one of the primary rRNA binding proteins, it binds directly to 16S rRNA where it helps nucleate assembly of the platform of the 30S subunit by binding and bridging several RNA helices of the 16S rRNA. In terms of biological role, forms an intersubunit bridge (bridge B4) with the 23S rRNA of the 50S subunit in the ribosome. This is Small ribosomal subunit protein uS15 from Novosphingobium aromaticivorans (strain ATCC 700278 / DSM 12444 / CCUG 56034 / CIP 105152 / NBRC 16084 / F199).